A 243-amino-acid polypeptide reads, in one-letter code: Uridylate kinase (243 aa).

ATP is bound at residue 18 to 21 (KLGG). UMP is bound at residue glycine 59. ATP-binding residues include glycine 60 and arginine 64. UMP contacts are provided by residues aspartate 79 and 140–147 (MGMPYFST). ATP contacts are provided by tyrosine 173 and aspartate 176.

It belongs to the UMP kinase family. In terms of assembly, homohexamer.

It is found in the cytoplasm. It carries out the reaction UMP + ATP = UDP + ADP. It functions in the pathway pyrimidine metabolism; CTP biosynthesis via de novo pathway; UDP from UMP (UMPK route): step 1/1. With respect to regulation, inhibited by UTP. Functionally, catalyzes the reversible phosphorylation of UMP to UDP. The polypeptide is Uridylate kinase (Corynebacterium diphtheriae (strain ATCC 700971 / NCTC 13129 / Biotype gravis)).